Here is a 483-residue protein sequence, read N- to C-terminus: Auxin transporter-like protein 2 (483 aa).

Over 1–53 (MENGEKAAETVVVGNYVEMEKDGKALDIKSKLSDMFWHGGSAYDAWFSCASNQ) the chain is Cytoplasmic. Residues 54–71 (VAQVLLTLPYSFSQLGML) traverse the membrane as a helical segment. Residues 72–73 (SG) are Extracellular-facing. The helical transmembrane segment at 74-94 (ILFQLFYGILGSWTAYLISIL) threads the bilayer. Topologically, residues 95 to 130 (YVEYRTRKEREKVNFRNHVIQWFEVLDGLLGKHWRN) are cytoplasmic. A helical membrane pass occupies residues 131-151 (VGLAFNCTFLLFGSVIQLIAC). Over 152–166 (ASNIYYINDNLDKRT) the chain is Extracellular. Residues 167–187 (WTYIFGACCATTVFIPSFHNY) traverse the membrane as a helical segment. Over 188-190 (RIW) the chain is Cytoplasmic. The helical transmembrane segment at 191–211 (SFLGLLMTTYTAWYLTIASIL) threads the bilayer. Over 212 to 226 (HGQVEGVKHSGPSKL) the chain is Extracellular. Residues 227 to 247 (VLYFTGATNILYTFGGHAVTV) form a helical membrane-spanning segment. The Cytoplasmic segment spans residues 248–261 (EIMHAMWKPQKFKS). The chain crosses the membrane as a helical span at residues 262 to 282 (IYLFATLYVLTLTLPSASAVY). Residues 283–306 (WAFGDLLLNHSNAFALLPKNLYRD) lie on the Extracellular side of the membrane. Residue Asn-291 is glycosylated (N-linked (GlcNAc...) asparagine). A helical membrane pass occupies residues 307-327 (FAVVLMLIHQFITFGFACTPL). The Cytoplasmic portion of the chain corresponds to 328 to 350 (YFVWEKLIGMHECRSMCKRAAAR). The helical transmembrane segment at 351 to 371 (LPVVIPIWFLAIIFPFFGPIN) threads the bilayer. Residues 372–374 (STV) lie on the Extracellular side of the membrane. The helical transmembrane segment at 375 to 395 (GSLLVSFTVYIIPALAHIFTF) threads the bilayer. Residues 396 to 422 (RSSAARENAVEQPPRFLGRWTGAFTIN) are Cytoplasmic-facing. The chain crosses the membrane as a helical span at residues 423–443 (AFIVVWVFIVGFGFGGWASMI). At 444–483 (NFVHQIDTFGLFTKCYQCPPPVMVSPPPISHPHFNHTHGL) the chain is on the extracellular side. An N-linked (GlcNAc...) asparagine glycan is attached at Asn-478.

Belongs to the amino acid/polyamine transporter 2 family. Amino acid/auxin permease (AAAP) (TC 2.A.18.1) subfamily.

Its subcellular location is the cell membrane. Its function is as follows. Carrier protein involved in proton-driven auxin influx. Mediates the formation of auxin gradient from developing leaves (site of auxin biosynthesis) to tips by contributing to the loading of auxin in vascular tissues and facilitating acropetal (base to tip) auxin transport within inner tissues of the root apex, and basipetal (tip to base) auxin transport within outer tissues of the root apex. The protein is Auxin transporter-like protein 2 (LAX2) of Arabidopsis thaliana (Mouse-ear cress).